Consider the following 254-residue polypeptide: 3-deoxy-manno-octulosonate cytidylyltransferase (254 aa).

The protein belongs to the KdsB family.

Its subcellular location is the cytoplasm. It carries out the reaction 3-deoxy-alpha-D-manno-oct-2-ulosonate + CTP = CMP-3-deoxy-beta-D-manno-octulosonate + diphosphate. Its pathway is nucleotide-sugar biosynthesis; CMP-3-deoxy-D-manno-octulosonate biosynthesis; CMP-3-deoxy-D-manno-octulosonate from 3-deoxy-D-manno-octulosonate and CTP: step 1/1. It participates in bacterial outer membrane biogenesis; lipopolysaccharide biosynthesis. Its function is as follows. Activates KDO (a required 8-carbon sugar) for incorporation into bacterial lipopolysaccharide in Gram-negative bacteria. This is 3-deoxy-manno-octulosonate cytidylyltransferase from Chlamydia trachomatis serovar A (strain ATCC VR-571B / DSM 19440 / HAR-13).